We begin with the raw amino-acid sequence, 220 residues long: dITP/XTP pyrophosphatase (220 aa).

Residue Ser13 to Lys18 participates in substrate binding. Residues Asp45 and Asp74 each coordinate Mg(2+). The active-site Proton acceptor is the Asp74. Substrate is bound by residues Ser75, Phe163 to Asp166, Lys186, and His199 to Arg200.

The protein belongs to the HAM1 NTPase family. As to quaternary structure, homodimer. Requires Mg(2+) as cofactor.

It catalyses the reaction XTP + H2O = XMP + diphosphate + H(+). The catalysed reaction is dITP + H2O = dIMP + diphosphate + H(+). It carries out the reaction ITP + H2O = IMP + diphosphate + H(+). Pyrophosphatase that catalyzes the hydrolysis of nucleoside triphosphates to their monophosphate derivatives, with a high preference for the non-canonical purine nucleotides XTP (xanthosine triphosphate), dITP (deoxyinosine triphosphate) and ITP. Seems to function as a house-cleaning enzyme that removes non-canonical purine nucleotides from the nucleotide pool, thus preventing their incorporation into DNA/RNA and avoiding chromosomal lesions. The protein is dITP/XTP pyrophosphatase of Brucella melitensis biotype 1 (strain ATCC 23456 / CCUG 17765 / NCTC 10094 / 16M).